We begin with the raw amino-acid sequence, 22 residues long: Mu-conotoxin TIIIA (22 aa).

Disulfide bonds link cysteine 4-cysteine 16, cysteine 5-cysteine 21, and cysteine 11-cysteine 22. 4-hydroxyproline occurs at positions 8 and 18. Cysteine amide is present on cysteine 22.

Belongs to the conotoxin M superfamily. As to expression, expressed by the venom duct.

Its subcellular location is the secreted. Functionally, mu-conotoxins block voltage-gated sodium channels (Nav). This synthetic toxin reversibly and potently blocks rNav1.4/SCN4A (IC(50) is 9 nM) and rNav1.2/SCN2A (IC(50) is 40 nM). It also moderately blocks rNav1.1/SCN1A, rNav1.3/SCN3A, and rNav1.6/SCN8A. The block of SCN1A and SCN2A is modified when beta-subunits are coexpressed with alpha subunits. Hence, blocks of channels containing beta-1 and beta-3 subunits are more potent (compared to channels without beta subunits), whereas blocks of channels containing beta-2 and beta-4 subunits are less potent (compared to channels without beta subunits). This is Mu-conotoxin TIIIA from Conus tulipa (Fish-hunting cone snail).